A 161-amino-acid polypeptide reads, in one-letter code: Nucleotide-binding protein ABO_0048 (161 aa).

Belongs to the YajQ family.

Functionally, nucleotide-binding protein. This chain is Nucleotide-binding protein ABO_0048, found in Alcanivorax borkumensis (strain ATCC 700651 / DSM 11573 / NCIMB 13689 / SK2).